The following is a 195-amino-acid chain: Imidazoleglycerol-phosphate dehydratase (195 aa).

It belongs to the imidazoleglycerol-phosphate dehydratase family.

The protein resides in the cytoplasm. It carries out the reaction D-erythro-1-(imidazol-4-yl)glycerol 3-phosphate = 3-(imidazol-4-yl)-2-oxopropyl phosphate + H2O. The protein operates within amino-acid biosynthesis; L-histidine biosynthesis; L-histidine from 5-phospho-alpha-D-ribose 1-diphosphate: step 6/9. The polypeptide is Imidazoleglycerol-phosphate dehydratase (Endomicrobium trichonymphae).